An 862-amino-acid chain; its full sequence is DNA mismatch repair protein MutS (862 aa).

604–611 contributes to the ATP binding site; the sequence is GPNMAGKS.

Belongs to the DNA mismatch repair MutS family.

This protein is involved in the repair of mismatches in DNA. It is possible that it carries out the mismatch recognition step. This protein has a weak ATPase activity. This chain is DNA mismatch repair protein MutS, found in Brevibacillus brevis (strain 47 / JCM 6285 / NBRC 100599).